Here is a 243-residue protein sequence, read N- to C-terminus: NAD-dependent protein deacetylase (243 aa).

In terms of domain architecture, Deacetylase sirtuin-type spans 1 to 243 (MRNDLETLKH…VSVVKSLMTE (243 aa)). NAD(+) is bound by residues alanine 24, phenylalanine 35, arginine 36, glutamine 105, isoleucine 107, aspartate 108, and histidine 123. Phenylalanine 35 provides a ligand contact to nicotinamide. Residues isoleucine 107 and aspartate 108 each coordinate nicotinamide. Histidine 123 acts as the Proton acceptor in catalysis. Zn(2+) contacts are provided by cysteine 131, cysteine 134, cysteine 151, and cysteine 154. NAD(+) contacts are provided by serine 192, serine 193, asparagine 215, and aspartate 232.

Belongs to the sirtuin family. Class U subfamily. The cofactor is Zn(2+).

The protein resides in the cytoplasm. The enzyme catalyses N(6)-acetyl-L-lysyl-[protein] + NAD(+) + H2O = 2''-O-acetyl-ADP-D-ribose + nicotinamide + L-lysyl-[protein]. In terms of biological role, NAD-dependent protein deacetylase which modulates the activities of several enzymes which are inactive in their acetylated form. The sequence is that of NAD-dependent protein deacetylase from Staphylococcus aureus (strain Mu50 / ATCC 700699).